Here is a 66-residue protein sequence, read N- to C-terminus: UPF0434 protein Mnod_1613 (66 aa).

This sequence belongs to the UPF0434 family.

The protein is UPF0434 protein Mnod_1613 of Methylobacterium nodulans (strain LMG 21967 / CNCM I-2342 / ORS 2060).